Consider the following 364-residue polypeptide: Probable mannose-1-phosphate guanylyltransferase 2 (364 aa).

2 residues coordinate GDP-alpha-D-mannose: Leu-6 and Val-7. The diphosphate site is built by Gly-9, Gly-11, Thr-12, Arg-13, and Lys-23. The GDP-alpha-D-mannose site is built by Gly-88, Asn-112, Asp-114, Gly-149, and Asn-176.

It belongs to the transferase hexapeptide repeat family.

It carries out the reaction alpha-D-mannose 1-phosphate + GTP + H(+) = GDP-alpha-D-mannose + diphosphate. The protein operates within nucleotide-sugar biosynthesis; GDP-alpha-D-mannose biosynthesis; GDP-alpha-D-mannose from alpha-D-mannose 1-phosphate (GTP route): step 1/1. Its function is as follows. Catalyzes a reaction of the Smirnoff-Wheeler pathway, the major route to ascorbate biosynthesis in plants. In Arabidopsis thaliana (Mouse-ear cress), this protein is Probable mannose-1-phosphate guanylyltransferase 2.